We begin with the raw amino-acid sequence, 321 residues long: Protease HtpX homolog (321 aa).

The next 2 membrane-spanning stretches (helical) occupy residues 6 to 26 (TAMLLAFMTALFMGVGFLIGG) and 28 to 48 (GGMMIALLIAAGMNLFSYWNS). His-130 contributes to the Zn(2+) binding site. Residue Glu-131 is part of the active site. Residue His-134 participates in Zn(2+) binding. 2 helical membrane-spanning segments follow: residues 145–165 (ITATLAGAISMLGNFAFFFGG) and 173–193 (PLGFIGVLVAMIVAPLAAMLV). Position 202 (Glu-202) interacts with Zn(2+). The segment at 281 to 321 (EFSPRASTPPPSGDRPVRKSGSVPTTGWRRGNENERKGPWS) is disordered. Positions 310–321 (RGNENERKGPWS) are enriched in basic and acidic residues.

It belongs to the peptidase M48B family. Zn(2+) serves as cofactor.

The protein localises to the cell inner membrane. This chain is Protease HtpX homolog, found in Agrobacterium fabrum (strain C58 / ATCC 33970) (Agrobacterium tumefaciens (strain C58)).